The primary structure comprises 350 residues: 3-methylornithine synthase (350 aa).

In terms of domain architecture, Radical SAM core spans 57-279; sequence NRVFLNCFIY…PKCLIPASLD (223 aa). [4Fe-4S] cluster-binding residues include cysteine 71 and cysteine 75. Phenylalanine 77 is an S-adenosyl-L-methionine binding site. Cysteine 78 contributes to the [4Fe-4S] cluster binding site. (3R)-3-methyl-D-ornithine-binding residues include aspartate 112, serine 146, and tyrosine 169. S-adenosyl-L-methionine-binding residues include glutamate 171, arginine 182, and arginine 190. (3R)-3-methyl-D-ornithine is bound at residue arginine 235. Residues leucine 240 and glutamine 242 each contribute to the S-adenosyl-L-methionine site. (3R)-3-methyl-D-ornithine contacts are provided by serine 277, threonine 298, and serine 299.

It belongs to the radical SAM superfamily. PylB family. The cofactor is [4Fe-4S] cluster. It depends on S-adenosyl-L-methionine as a cofactor.

The enzyme catalyses L-lysine = (3R)-3-methyl-D-ornithine. Its pathway is amino-acid biosynthesis; L-pyrrolysine biosynthesis. Catalyzes the isomerization of L-lysine to (3R)-3-methyl-D-ornithine via a radical-based mechanism. Is required for the biosynthesis of pyrrolysine. In Methanosarcina acetivorans (strain ATCC 35395 / DSM 2834 / JCM 12185 / C2A), this protein is 3-methylornithine synthase (pylB).